The chain runs to 132 residues: Small ribosomal subunit protein uS8 (132 aa).

This sequence belongs to the universal ribosomal protein uS8 family. Part of the 30S ribosomal subunit. Contacts proteins S5 and S12.

One of the primary rRNA binding proteins, it binds directly to 16S rRNA central domain where it helps coordinate assembly of the platform of the 30S subunit. This Streptomyces coelicolor (strain ATCC BAA-471 / A3(2) / M145) protein is Small ribosomal subunit protein uS8.